The following is a 509-amino-acid chain: Maturase K (509 aa).

The protein belongs to the intron maturase 2 family. MatK subfamily.

It localises to the plastid. It is found in the chloroplast. Its function is as follows. Usually encoded in the trnK tRNA gene intron. Probably assists in splicing its own and other chloroplast group II introns. This chain is Maturase K, found in Arpophyllum giganteum (Hyacinth orchid).